Here is a 242-residue protein sequence, read N- to C-terminus: Uridylate kinase (242 aa).

An ATP-binding site is contributed by 16–19 (KVSG). Position 58 (G58) interacts with UMP. G59 and R63 together coordinate ATP. UMP-binding positions include D78 and 139-146 (TGNPFCTT). 4 residues coordinate ATP: T166, Q167, Y172, and D175.

It belongs to the UMP kinase family. In terms of assembly, homohexamer.

It localises to the cytoplasm. It carries out the reaction UMP + ATP = UDP + ADP. Its pathway is pyrimidine metabolism; CTP biosynthesis via de novo pathway; UDP from UMP (UMPK route): step 1/1. With respect to regulation, inhibited by UTP. Its function is as follows. Catalyzes the reversible phosphorylation of UMP to UDP. The polypeptide is Uridylate kinase (Rickettsia felis (strain ATCC VR-1525 / URRWXCal2) (Rickettsia azadi)).